We begin with the raw amino-acid sequence, 322 residues long: Quinolinate synthase (322 aa).

Iminosuccinate contacts are provided by H37 and S54. C99 is a [4Fe-4S] cluster binding site. Residues 125–127 and S142 contribute to the iminosuccinate site; that span reads YVN. C185 serves as a coordination point for [4Fe-4S] cluster. Residues 211–213 and T228 each bind iminosuccinate; that span reads HPE. Residue C278 participates in [4Fe-4S] cluster binding.

Belongs to the quinolinate synthase family. Type 2 subfamily. [4Fe-4S] cluster is required as a cofactor.

Its subcellular location is the cytoplasm. The enzyme catalyses iminosuccinate + dihydroxyacetone phosphate = quinolinate + phosphate + 2 H2O + H(+). The protein operates within cofactor biosynthesis; NAD(+) biosynthesis; quinolinate from iminoaspartate: step 1/1. In terms of biological role, catalyzes the condensation of iminoaspartate with dihydroxyacetone phosphate to form quinolinate. The protein is Quinolinate synthase of Chlorobaculum tepidum (strain ATCC 49652 / DSM 12025 / NBRC 103806 / TLS) (Chlorobium tepidum).